The following is a 589-amino-acid chain: uncharacterized protein (589 aa).

The next 5 membrane-spanning stretches (helical) occupy residues 11–31 (LNWI…TMLA), 57–77 (LILM…FSVL), 97–117 (FWFF…HAIA), 190–210 (IEFT…GFNI), and 213–233 (GVVF…VWIG). An ABC transmembrane type-1 domain is found at 57-357 (LILMLLVLFI…FRLFYEQFTL (301 aa)). Residues 390-587 (VALKNFGIKD…QLKLDVCLLC (198 aa)) form the ABC transporter domain. 423–430 (GASGTGKT) provides a ligand contact to ATP.

This sequence belongs to the ABC transporter superfamily.

Its subcellular location is the cell inner membrane. This is an uncharacterized protein from Haemophilus influenzae (strain ATCC 51907 / DSM 11121 / KW20 / Rd).